The chain runs to 734 residues: DNA replication licensing factor MCM5 (734 aa).

At S2 the chain carries N-acetylserine. One can recognise an MCM domain in the interval 331–537 (IYELISKSIA…RDVMLAKHVI (207 aa)). R371 contributes to the ADP binding site. K392 and K396 each carry N6-acetyllysine. Residues 512–515 (SRFD) carry the Arginine finger motif. At S605 the chain carries Phosphoserine.

It belongs to the MCM family. As to quaternary structure, component of the MCM2-7 complex. The complex forms a toroidal hexameric ring with the proposed subunit order MCM2-MCM6-MCM4-MCM7-MCM3-MCM5. Component of the CMG helicase complex, a hexameric ring of related MCM2-7 subunits stabilized by CDC45 and the tetrameric GINS complex. Interacts with ANKRD17. Interacts with MCMBP. Interacts with TONSL; the interaction is direct.

Its subcellular location is the nucleus. It localises to the chromosome. The protein localises to the cytoplasm. It is found in the cytosol. It catalyses the reaction ATP + H2O = ADP + phosphate + H(+). In terms of biological role, acts as a component of the MCM2-7 complex (MCM complex) which is the replicative helicase essential for 'once per cell cycle' DNA replication initiation and elongation in eukaryotic cells. Core component of CDC45-MCM-GINS (CMG) helicase, the molecular machine that unwinds template DNA during replication, and around which the replisome is built. The active ATPase sites in the MCM2-7 ring are formed through the interaction surfaces of two neighboring subunits such that a critical structure of a conserved arginine finger motif is provided in trans relative to the ATP-binding site of the Walker A box of the adjacent subunit. The six ATPase active sites, however, are likely to contribute differentially to the complex helicase activity. The polypeptide is DNA replication licensing factor MCM5 (Bos taurus (Bovine)).